The primary structure comprises 156 residues: Small ribosomal subunit protein uS7 (156 aa).

This sequence belongs to the universal ribosomal protein uS7 family. Part of the 30S ribosomal subunit. Contacts proteins S9 and S11.

Its function is as follows. One of the primary rRNA binding proteins, it binds directly to 16S rRNA where it nucleates assembly of the head domain of the 30S subunit. Is located at the subunit interface close to the decoding center, probably blocks exit of the E-site tRNA. The chain is Small ribosomal subunit protein uS7 from Bacillus pumilus (strain SAFR-032).